The chain runs to 1347 residues: G-protein coupled receptor-associated sorting protein 1 (1347 aa).

3 disordered regions span residues 1–75 (MTRA…AYAK), 145–174 (ESIP…SWYR), and 188–281 (DFKW…NSRS). A compositionally biased stretch (low complexity) spans 21–33 (ENANAAEVEPEAP). A compositionally biased stretch (basic residues) spans 211-226 (FRPRKSMKANNRFRHM). A compositionally biased stretch (basic and acidic residues) spans 263 to 278 (PKDKTKVWSKPKEEPN). At S295 the chain carries Phosphoserine. 3 disordered regions span residues 310 to 344 (GEEA…AMSG), 364 to 396 (FSKS…QEAR), and 460 to 485 (QVSS…SKSM). The span at 316–325 (RSKPRARKGV) shows a compositional bias: basic residues. Residues 370–396 (KKEPRTRAVPKEEVKTKARASTKQEAR) are compositionally biased toward basic and acidic residues. Residues 461–484 (VSSFCLGSGKKSSMESGPKATSKS) show a composition bias toward polar residues. Residues S619 and S626 each carry the phosphoserine modification. T860 bears the Phosphothreonine mark. S862 carries the post-translational modification Phosphoserine.

The protein belongs to the GPRASP family. In terms of assembly, interacts with cytoplasmic tails of a variety of G-protein coupled receptors such as delta opioid receptor/OPRD1, beta-2 adrenergic receptor/ADRB2 and D4 dopamine receptor/DRD4 as well as D2 dopamine receptor/DRD2. Interacts with PER1. Interacts with BECN2; the interaction is direct. Expressed in the brain, with higher expression in the hippocampus, hypothalamus and olfactory bulb.

Its subcellular location is the cytoplasm. Modulates lysosomal sorting and functional down-regulation of a variety of G-protein coupled receptors. Targets receptors for degradation in lysosomes via its interaction with BECN2. In Mus musculus (Mouse), this protein is G-protein coupled receptor-associated sorting protein 1 (Gprasp1).